The following is a 432-amino-acid chain: MDALEKGAVTSGPAPRGRPSRGRPPKLQRSRGAGRGLEKPPHLAALVLARGGSKGIPLKNIKRLAGVPLIGWVLRAALDAGVFQSVWVSTDHDEIENVAKQFGAQVHRRSSETSKDSSTSLDAIVEFLNYHNEVDIVGNIQATSPCLHPTDLQKVAEMIREEGYDSVFSVVRRHQFRWSEIQKGVREVTEPLNLNPAKRPRRQDWDGELYENGSFYFAKRHLIEMGYLQGGKMAYYEMRAEHSVDIDVDIDWPIAEQRVLRFGYFGKEKLKEIKLLVCNIDGCLTNGHIYVSGDQKEIISYDVKDAIGISLLKKSGIEVRLISERACSKQTLSALKLDCKTEVSVSDKLATVDEWRKEMGLCWKEVAYLGNEVSDEECLKRVGLSAVPADACSGAQKAVGYICKCSGGRGAIREFAEHIFLLIEKVNNSCQK.

M1 is modified (N-acetylmethionine). Residues 1–38 form a disordered region; it reads MDALEKGAVTSGPAPRGRPSRGRPPKLQRSRGAGRGLE. The short motif at 15–31 is the BC1 motif element; sequence PRGRPSRGRPPKLQRSR. Over residues 18–29 the composition is skewed to basic residues; it reads RPSRGRPPKLQR. Omega-N-methylarginine is present on residues R35 and R50. Substrate contacts are provided by R50, N60, R109, S118, S120, and Q141. The short motif at 198-204 is the BC2 motif element; the sequence is KRPRRQD. R199 is a catalytic residue. Positions 267–274 match the BC3 motif motif; sequence KEKLKEIK.

The protein belongs to the CMP-NeuNAc synthase family. As to quaternary structure, homotetramer; the active enzyme is formed by a dimer of dimers. Highly expressed in brain and heart, and at intermediate level muscle and liver.

Its subcellular location is the nucleus. The catalysed reaction is an N-acylneuraminate + CTP = a CMP-N-acyl-beta-neuraminate + diphosphate. It functions in the pathway amino-sugar metabolism; N-acetylneuraminate metabolism. In terms of biological role, catalyzes the activation of N-acetylneuraminic acid (NeuNAc) to cytidine 5'-monophosphate N-acetylneuraminic acid (CMP-NeuNAc), a substrate required for the addition of sialic acid. Has some activity toward NeuNAc, N-glycolylneuraminic acid (Neu5Gc) or 2-keto-3-deoxy-D-glycero-D-galacto-nononic acid (KDN). The polypeptide is N-acylneuraminate cytidylyltransferase (Cmas) (Mus musculus (Mouse)).